The chain runs to 311 residues: Urease accessory protein UreD (311 aa).

It belongs to the UreD family. As to quaternary structure, ureD, UreF and UreG form a complex that acts as a GTP-hydrolysis-dependent molecular chaperone, activating the urease apoprotein by helping to assemble the nickel containing metallocenter of UreC. The UreE protein probably delivers the nickel.

It localises to the cytoplasm. Required for maturation of urease via the functional incorporation of the urease nickel metallocenter. The sequence is that of Urease accessory protein UreD from Synechococcus sp. (strain CC9902).